A 282-amino-acid chain; its full sequence is Bis(5'-nucleosyl)-tetraphosphatase, symmetrical (282 aa).

It belongs to the Ap4A hydrolase family.

It carries out the reaction P(1),P(4)-bis(5'-adenosyl) tetraphosphate + H2O = 2 ADP + 2 H(+). Functionally, hydrolyzes diadenosine 5',5'''-P1,P4-tetraphosphate to yield ADP. The polypeptide is Bis(5'-nucleosyl)-tetraphosphatase, symmetrical (Escherichia coli O127:H6 (strain E2348/69 / EPEC)).